Reading from the N-terminus, the 377-residue chain is DnaJ-related protein SCJ1 (377 aa).

Residues 1-21 (MIPKLYIHLILSLLLLPLILA) form the signal peptide. In terms of domain architecture, J spans 23-88 (DYYAILEIDK…EKKKIYDQFG (66 aa)). A CR-type zinc finger spans residues 156–237 (GSSIEFTLNL…CHGKKVTKKN (82 aa)). CXXCXGXG motif repeat units lie at residues 169 to 176 (CDACHGSG), 185 to 192 (CPDCQGRG), 211 to 218 (CGRCGGTG), and 225 to 232 (CKTCHGKK). The Cell attachment site signature appears at 288–290 (RGD). The Prevents secretion from ER signature appears at 374–377 (KDEL).

It is found in the endoplasmic reticulum lumen. In terms of biological role, regulates protein folding in the endoplasmic reticulum lumen. Probably acts as a J-protein for the Hsp70-type chaperone KAR2 by stimulating its ATP-dependent reaction cycle and initiating folding reactions. Also involved in the endoplasmic reticulum-associated degradation (ERAD) process. Cooperates with KAR2 and another J-protein JEM1 to facilitate the export of ERAD substrates to the cytoplasm by maintaining them in a translocation-competent state and preventing their aggregation in the endoplasmic reticulum lumen. The polypeptide is DnaJ-related protein SCJ1 (SCJ1) (Saccharomyces cerevisiae (strain ATCC 204508 / S288c) (Baker's yeast)).